The primary structure comprises 360 residues: Alpha-N-acetyl-neuraminyl-2,3-beta-galactosyl-1,3-N-acetyl-galactosaminide alpha-2,6-sialyltransferase (360 aa).

Residues Met1–Cys71 are Cytoplasmic-facing. A helical; Signal-anchor for type II membrane protein transmembrane segment spans residues Ile72 to Thr94. Residues Cys95–Lys360 are Lumenal-facing. Cys134 and Cys283 are joined by a disulfide. Asn193 is a glycosylation site (N-linked (GlcNAc...) asparagine).

The protein belongs to the glycosyltransferase 29 family. In terms of tissue distribution, high expression in brain and colon and to a lesser extent in lung, heart, kidney, spleen and thymus.

The protein resides in the golgi apparatus membrane. It carries out the reaction an alpha-Neu5Ac-(2-&gt;3)-beta-D-Gal-(1-&gt;3)-D-GlcNAc derivative + CMP-N-acetyl-beta-neuraminate = an alpha-Neu5Ac-(2-&gt;3)-beta-D-Gal-(1-&gt;3)-[alpha-Neu5Ac-(2-&gt;6)]-D-GlcNAc derivative + CMP + H(+). The catalysed reaction is N-acetyl-alpha-neuraminosyl-(2-&gt;3)-beta-D-galactosyl-(1-&gt;3)-N-acetyl-D-galactosamine + CMP-N-acetyl-beta-neuraminate = N-acetyl-alpha-neuraminosyl-(2-&gt;3)-beta-D-galactosyl-(1-&gt;3)-[N-acetyl-alpha-neuraminosyl-(2-&gt;6)]-N-acetyl-D-galactosamine + CMP + H(+). The enzyme catalyses a ganglioside GM1b (d18:1(4E)) + CMP-N-acetyl-beta-neuraminate = a ganglioside GD1alpha (d18:1(4E)) + CMP + H(+). It catalyses the reaction 3-O-[alpha-Neu5Ac-(2-&gt;3)-beta-D-Gal-(1-&gt;3)-alpha-D-GalNAc]-L-Ser-[protein] + CMP-N-acetyl-beta-neuraminate = a 3-O-{alpha-Neu5Ac-(2-&gt;3)-beta-D-Gal-(1-&gt;3)-[alpha-Neu5Ac-(2-&gt;6)]-alpha-D-GalNAc}-L-seryl-[protein] + CMP + H(+). It carries out the reaction 3-O-[alpha-Neu5Ac-(2-&gt;3)-beta-D-Gal-(1-&gt;3)-alpha-D-GalNAc]-L-Thr-[protein] + CMP-N-acetyl-beta-neuraminate = a 3-O-{alpha-Neu5Ac-(2-&gt;3)-beta-D-Gal-(1-&gt;3)-[alpha-Neu5Ac-(2-&gt;6)]-alpha-D-GalNAc}-L-threonyl-[protein] + CMP + H(+). It functions in the pathway protein modification; protein glycosylation. Its pathway is glycolipid biosynthesis. Transfers the sialyl group (N-acetyl-alpha-neuraminyl or NeuAc) from CMP-NeuAc to the GalNAc residue on the NeuAc-alpha-2,3-Gal-beta-1,3-GalNAc sequence of glycoproteins and glycolipids forming an alpha-2,6-linkage. Produces branched type disialyl structures by transfer of a sialyl group onto a GalNAc residue inside the backbone core chains. Prefers O-glycans to glycoproteins or glycolipids. This Mus musculus (Mouse) protein is Alpha-N-acetyl-neuraminyl-2,3-beta-galactosyl-1,3-N-acetyl-galactosaminide alpha-2,6-sialyltransferase (St6galnac4).